Consider the following 167-residue polypeptide: Phosphopantetheine adenylyltransferase (167 aa).

Serine 11 is a substrate binding site. Residues 11–12 (SF) and histidine 19 contribute to the ATP site. Positions 43, 76, and 90 each coordinate substrate. ATP-binding positions include 91–93 (GIR), glutamate 101, and 126–132 (YDALSST).

The protein belongs to the bacterial CoaD family. Homohexamer. Mg(2+) serves as cofactor.

The protein resides in the cytoplasm. It catalyses the reaction (R)-4'-phosphopantetheine + ATP + H(+) = 3'-dephospho-CoA + diphosphate. The protein operates within cofactor biosynthesis; coenzyme A biosynthesis; CoA from (R)-pantothenate: step 4/5. Its function is as follows. Reversibly transfers an adenylyl group from ATP to 4'-phosphopantetheine, yielding dephospho-CoA (dPCoA) and pyrophosphate. This is Phosphopantetheine adenylyltransferase from Lacticaseibacillus casei (strain BL23) (Lactobacillus casei).